Here is a 465-residue protein sequence, read N- to C-terminus: Gamma-aminobutyric acid receptor subunit rho-2 (465 aa).

Positions 1–20 are cleaved as a signal peptide; the sequence is MPYFSRLILFLFCLVVLVES. The Extracellular portion of the chain corresponds to 21-260; that stretch reads RKPKKRRWTG…LYINFTLRRH (240 aa). A 4-aminobutanoate-binding site is contributed by R105. N120 carries N-linked (GlcNAc...) asparagine glycosylation. 4-aminobutanoate is bound at residue S169. C178 and C192 are disulfide-bonded. A 4-aminobutanoate-binding site is contributed by E197. N-linked (GlcNAc...) asparagine glycosylation is present at N254. A helical transmembrane segment spans residues 261 to 281; sequence IFFFLLQTYFPATLMVMLSWV. Residues 282–293 are Cytoplasmic-facing; it reads SFWIDRRAVPAR. Residues 294-314 traverse the membrane as a helical segment; that stretch reads VSLGITTVLTMSTIITGVNAS. Topologically, residues 315–325 are extracellular; that stretch reads MPRVSYIKAVD. Residues 326–346 traverse the membrane as a helical segment; it reads IYLWVSFVFVFLSVLEYAAVN. The Cytoplasmic segment spans residues 347–444; the sequence is YLTTVQERKE…FQNTHAIDKY (98 aa). A helical membrane pass occupies residues 445–465; it reads SRLIFPASYIFFNLIYWSVFA.

This sequence belongs to the ligand-gated ion channel (TC 1.A.9) family. Gamma-aminobutyric acid receptor (TC 1.A.9.5) subfamily. GABRR2 sub-subfamily. As to quaternary structure, three rho subunits (rho-1/GBRR1, rho-2/GBRR2 and rho-3/GBRR3) coassemble either to form functional homopentamers or heteropentamers. Rho-2 is unable to form a functional homopentamer. Interacts with SQSTM1.

The protein resides in the postsynaptic cell membrane. It is found in the cell membrane. The enzyme catalyses chloride(in) = chloride(out). Rho subunit of the pentameric ligand-gated chloride channels responsible for mediating the effects of gamma-aminobutyric acid (GABA), the major inhibitory neurotransmitter in the brain. Rho-containing GABA-gated chloride channels are a subclass of GABA(A) receptors (GABAARs) entirely composed of rho subunits, where GABA molecules bind at the rho intersubunit interfaces. When activated by GABA, rho-GABAARs selectively allow the flow of chloride anions across the cell membrane down their electrochemical gradient. Rho-2 GABAARs may contribute to the regulation of glial development in the cerebellum by controlling extrasynaptic transmission. Rho-2 GABAARs are also involved in neuronal tonic (extrasynaptic) and phasic (synaptic) transmission in the Purkinje neurons of the cerebellum. Rho-2 GABAARs expressed in retina may play a role in retinal neurotransmission. This is Gamma-aminobutyric acid receptor subunit rho-2 (GABRR2) from Bos taurus (Bovine).